The following is a 101-amino-acid chain: Urease subunit beta (101 aa).

It belongs to the urease beta subunit family. Heterotrimer of UreA (gamma), UreB (beta) and UreC (alpha) subunits. Three heterotrimers associate to form the active enzyme.

It is found in the cytoplasm. The enzyme catalyses urea + 2 H2O + H(+) = hydrogencarbonate + 2 NH4(+). It participates in nitrogen metabolism; urea degradation; CO(2) and NH(3) from urea (urease route): step 1/1. The chain is Urease subunit beta from Dinoroseobacter shibae (strain DSM 16493 / NCIMB 14021 / DFL 12).